The sequence spans 1223 residues: Glycerophosphocholine phosphodiesterase GDE1 (1223 aa).

The region spanning Met1–Lys213 is the SPX domain. Positions His43–Asp59 are enriched in basic and acidic residues. Residues His43–Ala64 are disordered. ANK repeat units lie at residues Tyr427 to Ile456, Glu472 to Leu502, Ser504 to Tyr533, Leu538 to Ile567, Phe572 to Ile601, and Gly605 to His634. Ser653 is modified (phosphoserine). Residues Thr872–Leu1217 enclose the GP-PDE domain. 3 residues coordinate a divalent metal cation: Glu911, Asp913, and His926. At Ser983 the chain carries Phosphoserine.

This sequence belongs to the GDE1 family. A divalent metal cation serves as cofactor.

It localises to the cytoplasm. It carries out the reaction sn-glycerol 3-phosphocholine + H2O = sn-glycerol 3-phosphate + choline + H(+). The catalysed reaction is sn-glycero-3-phospho-1D-myo-inositol + H2O = myo-inositol + sn-glycerol 3-phosphate + H(+). Functionally, glycerophosphocholine glycerophosphodiesterase responsible for the hydrolysis of intracellular glycerophosphocholine into glycerol-phosphate and choline. The choline is used for phosphatidyl-choline synthesis. Required for utilization of glycerophosphocholine as phosphate source. May also use glycerophosphoinositol as substrate in vivo. This chain is Glycerophosphocholine phosphodiesterase GDE1, found in Saccharomyces cerevisiae (strain ATCC 204508 / S288c) (Baker's yeast).